A 469-amino-acid polypeptide reads, in one-letter code: Probable Xaa-Pro aminopeptidase PEPP (469 aa).

4 residues coordinate Mn(2+): Asp264, Asp275, Glu398, and Glu438.

This sequence belongs to the peptidase M24B family. It depends on Mn(2+) as a cofactor.

The enzyme catalyses Release of any N-terminal amino acid, including proline, that is linked to proline, even from a dipeptide or tripeptide.. Functionally, catalyzes the removal of a penultimate prolyl residue from the N-termini of peptides. This chain is Probable Xaa-Pro aminopeptidase PEPP (PEPP), found in Ajellomyces capsulatus (strain G186AR / H82 / ATCC MYA-2454 / RMSCC 2432) (Darling's disease fungus).